Reading from the N-terminus, the 283-residue chain is 4-diphosphocytidyl-2-C-methyl-D-erythritol kinase (283 aa).

The active site involves K10. ATP is bound at residue 99-109; that stretch reads PMGGGLGGGSS. D141 is a catalytic residue.

Belongs to the GHMP kinase family. IspE subfamily. As to quaternary structure, homodimer.

The enzyme catalyses 4-CDP-2-C-methyl-D-erythritol + ATP = 4-CDP-2-C-methyl-D-erythritol 2-phosphate + ADP + H(+). It participates in isoprenoid biosynthesis; isopentenyl diphosphate biosynthesis via DXP pathway; isopentenyl diphosphate from 1-deoxy-D-xylulose 5-phosphate: step 3/6. Functionally, catalyzes the phosphorylation of the position 2 hydroxy group of 4-diphosphocytidyl-2C-methyl-D-erythritol. This is 4-diphosphocytidyl-2-C-methyl-D-erythritol kinase from Salmonella typhi.